The following is a 75-amino-acid chain: UPF0270 protein PSPPH_1506 (75 aa).

It belongs to the UPF0270 family.

The chain is UPF0270 protein PSPPH_1506 from Pseudomonas savastanoi pv. phaseolicola (strain 1448A / Race 6) (Pseudomonas syringae pv. phaseolicola (strain 1448A / Race 6)).